We begin with the raw amino-acid sequence, 931 residues long: Histone-lysine N-methyltransferase EZ1 (931 aa).

The segment covering 1–30 has biased composition (low complexity); sequence MEAEAAAAVVASSASASASAGRSRPSSSAA. 3 disordered regions span residues 1–37, 372–450, and 491–549; these read MEAE…SNSA, PTHS…ITNR, and RNGN…YDSS. Positions 375-385 are enriched in polar residues; sequence SSDNVMNQPGS. Basic residues predominate over residues 386 to 398; the sequence is NRKKNGSSGRKTK. Over residues 423-433 the composition is skewed to polar residues; sequence SNKSPQHSPSP. Over residues 500 to 509 the composition is skewed to low complexity; that stretch reads SSQQSSPSTR. Residues 528–549 show a composition bias toward basic and acidic residues; it reads AHNDSTEEANNRHSATDGYDSS. The region spanning 565–615 is the SANT domain; sequence YLRSWKAIEQGLLVKGLEIFGRNSCLIARNLLGGMKTCKDVFQYMNYIENN. In terms of domain architecture, CXC spans 664 to 763; the sequence is FKRITERKDQ…TLGVPNQRGD (100 aa). Positions 778 to 893 constitute an SET domain; it reads QRVLLGRSDV…AGEELFYDYR (116 aa). Over residues 903–915 the composition is skewed to basic and acidic residues; it reads ARKPEASGAKDDG. A disordered region spans residues 903–931; it reads ARKPEASGAKDDGQPFNGRAKKLAQNNRG.

It belongs to the class V-like SAM-binding methyltransferase superfamily. Histone-lysine methyltransferase family. EZ subfamily. As to expression, widely expressed.

The protein resides in the nucleus. It catalyses the reaction L-lysyl(27)-[histone H3] + 3 S-adenosyl-L-methionine = N(6),N(6),N(6)-trimethyl-L-lysyl(27)-[histone H3] + 3 S-adenosyl-L-homocysteine + 3 H(+). Polycomb group (PcG) protein. Catalytic subunit of some PcG multiprotein complex, which methylates 'Lys-27' of histone H3, leading to transcriptional repression of the affected target genes. PcG proteins are not required to initiate repression, but to maintain it during later stages of development. This Zea mays (Maize) protein is Histone-lysine N-methyltransferase EZ1 (EZ1).